We begin with the raw amino-acid sequence, 349 residues long: Protein-glutamate methylesterase/protein-glutamine glutaminase (349 aa).

The region spanning 5–122 (RVLSVDDSAL…REGMLAYSEM (118 aa)) is the Response regulatory domain. D56 carries the post-translational modification 4-aspartylphosphate. One can recognise a CheB-type methylesterase domain in the interval 152 to 344 (LLSSEKLIAI…QQMLATISAG (193 aa)). Catalysis depends on residues S164, H190, and D286.

This sequence belongs to the CheB family. Phosphorylated by CheA. Phosphorylation of the N-terminal regulatory domain activates the methylesterase activity.

The protein localises to the cytoplasm. The catalysed reaction is [protein]-L-glutamate 5-O-methyl ester + H2O = L-glutamyl-[protein] + methanol + H(+). It catalyses the reaction L-glutaminyl-[protein] + H2O = L-glutamyl-[protein] + NH4(+). Functionally, involved in chemotaxis. Part of a chemotaxis signal transduction system that modulates chemotaxis in response to various stimuli. Catalyzes the demethylation of specific methylglutamate residues introduced into the chemoreceptors (methyl-accepting chemotaxis proteins or MCP) by CheR. Also mediates the irreversible deamidation of specific glutamine residues to glutamic acid. The polypeptide is Protein-glutamate methylesterase/protein-glutamine glutaminase (Shigella flexneri).